Here is a 520-residue protein sequence, read N- to C-terminus: Developmental regulatory protein wetA (520 aa).

Composition is skewed to polar residues over residues 109–118 (TATHALSISP), 155–165 (QSFSPSLMRSS), and 378–392 (SSQK…SQVH). Disordered regions lie at residues 109-165 (TATH…MRSS), 378-454 (SSQK…SNKS), and 468-496 (KKIL…RRRK). Over residues 420–429 (PTHRRTHSRK) the composition is skewed to basic residues. Low complexity predominate over residues 445 to 454 (SSSSRGSNKS).

This sequence belongs to the wetA family.

Its function is as follows. BrlA, abaA and wetA are pivotal regulators of conidiophore development and conidium maturation. They act individually and together to regulate their own expression and that of numerous other sporulation-specific genes. This is Developmental regulatory protein wetA from Penicillium roqueforti (strain FM164).